The sequence spans 336 residues: Holliday junction branch migration complex subunit RuvB (336 aa).

A large ATPase domain (RuvB-L) region spans residues 4–185 (MDERLLSGES…FGVLSRLEYY (182 aa)). Residues Leu-24, Arg-25, Gly-66, Lys-69, Thr-70, Thr-71, 132 to 134 (EDF), Arg-175, Tyr-185, and Arg-222 contribute to the ATP site. Thr-70 provides a ligand contact to Mg(2+). Residues 186–256 (TVDQLSAIVE…ITQMALELLQ (71 aa)) form a small ATPAse domain (RuvB-S) region. Positions 259–336 (KLGLDHIDHK…EHFGMEMPKV (78 aa)) are head domain (RuvB-H). 2 residues coordinate DNA: Arg-314 and Arg-319.

This sequence belongs to the RuvB family. In terms of assembly, homohexamer. Forms an RuvA(8)-RuvB(12)-Holliday junction (HJ) complex. HJ DNA is sandwiched between 2 RuvA tetramers; dsDNA enters through RuvA and exits via RuvB. An RuvB hexamer assembles on each DNA strand where it exits the tetramer. Each RuvB hexamer is contacted by two RuvA subunits (via domain III) on 2 adjacent RuvB subunits; this complex drives branch migration. In the full resolvosome a probable DNA-RuvA(4)-RuvB(12)-RuvC(2) complex forms which resolves the HJ.

It localises to the cytoplasm. The catalysed reaction is ATP + H2O = ADP + phosphate + H(+). Functionally, the RuvA-RuvB-RuvC complex processes Holliday junction (HJ) DNA during genetic recombination and DNA repair, while the RuvA-RuvB complex plays an important role in the rescue of blocked DNA replication forks via replication fork reversal (RFR). RuvA specifically binds to HJ cruciform DNA, conferring on it an open structure. The RuvB hexamer acts as an ATP-dependent pump, pulling dsDNA into and through the RuvAB complex. RuvB forms 2 homohexamers on either side of HJ DNA bound by 1 or 2 RuvA tetramers; 4 subunits per hexamer contact DNA at a time. Coordinated motions by a converter formed by DNA-disengaged RuvB subunits stimulates ATP hydrolysis and nucleotide exchange. Immobilization of the converter enables RuvB to convert the ATP-contained energy into a lever motion, pulling 2 nucleotides of DNA out of the RuvA tetramer per ATP hydrolyzed, thus driving DNA branch migration. The RuvB motors rotate together with the DNA substrate, which together with the progressing nucleotide cycle form the mechanistic basis for DNA recombination by continuous HJ branch migration. Branch migration allows RuvC to scan DNA until it finds its consensus sequence, where it cleaves and resolves cruciform DNA. This chain is Holliday junction branch migration complex subunit RuvB, found in Bacillus thuringiensis (strain Al Hakam).